The primary structure comprises 459 residues: GTPase Der (459 aa).

2 EngA-type G domains span residues 3-167 (FTLA…PEPV) and 188-363 (IRVA…AVWN). GTP contacts are provided by residues 9-16 (GRPNVGKS), 56-60 (DTAGL), 119-122 (NKSE), 194-201 (GRPNAGKS), 241-245 (DTAGL), and 306-309 (NKWD). The KH-like domain occupies 364-448 (RRVPTAALNR…PVRITLREKA (85 aa)).

The protein belongs to the TRAFAC class TrmE-Era-EngA-EngB-Septin-like GTPase superfamily. EngA (Der) GTPase family. In terms of assembly, associates with the 50S ribosomal subunit.

In terms of biological role, GTPase that plays an essential role in the late steps of ribosome biogenesis. The polypeptide is GTPase Der (Rhodopseudomonas palustris (strain TIE-1)).